The chain runs to 100 residues: NAD(P)H-quinone oxidoreductase subunit 4L, chloroplastic (100 aa).

A run of 3 helical transmembrane segments spans residues 1–21, 29–49, and 63–83; these read MIEN…YGLI, ALMC…TFSN, and ISVI…ILII.

The protein belongs to the complex I subunit 4L family. In terms of assembly, NDH is composed of at least 16 different subunits, 5 of which are encoded in the nucleus.

Its subcellular location is the plastid. The protein localises to the chloroplast thylakoid membrane. It catalyses the reaction a plastoquinone + NADH + (n+1) H(+)(in) = a plastoquinol + NAD(+) + n H(+)(out). The enzyme catalyses a plastoquinone + NADPH + (n+1) H(+)(in) = a plastoquinol + NADP(+) + n H(+)(out). NDH shuttles electrons from NAD(P)H:plastoquinone, via FMN and iron-sulfur (Fe-S) centers, to quinones in the photosynthetic chain and possibly in a chloroplast respiratory chain. The immediate electron acceptor for the enzyme in this species is believed to be plastoquinone. Couples the redox reaction to proton translocation, and thus conserves the redox energy in a proton gradient. The sequence is that of NAD(P)H-quinone oxidoreductase subunit 4L, chloroplastic from Angiopteris evecta (Mule's foot fern).